Consider the following 214-residue polypeptide: Large ribosomal subunit protein uL3 (214 aa).

Q155 is modified (N5-methylglutamine).

Belongs to the universal ribosomal protein uL3 family. In terms of assembly, part of the 50S ribosomal subunit. Forms a cluster with proteins L14 and L19. Post-translationally, methylated by PrmB.

In terms of biological role, one of the primary rRNA binding proteins, it binds directly near the 3'-end of the 23S rRNA, where it nucleates assembly of the 50S subunit. The sequence is that of Large ribosomal subunit protein uL3 from Acinetobacter baumannii (strain ACICU).